The sequence spans 66 residues: Large ribosomal subunit protein bL32 (66 aa).

This sequence belongs to the bacterial ribosomal protein bL32 family.

The polypeptide is Large ribosomal subunit protein bL32 (Rickettsia conorii (strain ATCC VR-613 / Malish 7)).